Here is a 26-residue protein sequence, read N- to C-terminus: Conotoxin Eb6.15 (26 aa).

Intrachain disulfides connect cysteine 7/cysteine 18 and cysteine 13/cysteine 25.

Belongs to the conotoxin O1 superfamily. In terms of tissue distribution, expressed by the venom duct.

Its subcellular location is the secreted. This is Conotoxin Eb6.15 (E1) from Conus ebraeus (Hebrew cone).